Here is a 496-residue protein sequence, read N- to C-terminus: Glycerol kinase (496 aa).

Residue Thr-12 coordinates ADP. Positions 12, 13, and 14 each coordinate ATP. Thr-12 contacts sn-glycerol 3-phosphate. Arg-16 contacts ADP. Residues Arg-82, Glu-83, and Tyr-134 each coordinate sn-glycerol 3-phosphate. 3 residues coordinate glycerol: Arg-82, Glu-83, and Tyr-134. Residue His-230 is modified to Phosphohistidine; by HPr. Residue Asp-244 participates in sn-glycerol 3-phosphate binding. Residues Asp-244 and Gln-245 each contribute to the glycerol site. Residues Thr-266 and Gly-309 each coordinate ADP. Positions 266, 309, 313, and 410 each coordinate ATP. Gly-410 and Asn-414 together coordinate ADP.

This sequence belongs to the FGGY kinase family. As to quaternary structure, homotetramer and homodimer (in equilibrium). The phosphoenolpyruvate-dependent sugar phosphotransferase system (PTS), including enzyme I, and histidine-containing protein (HPr) are required for the phosphorylation, which leads to the activation of the enzyme.

The enzyme catalyses glycerol + ATP = sn-glycerol 3-phosphate + ADP + H(+). It functions in the pathway polyol metabolism; glycerol degradation via glycerol kinase pathway; sn-glycerol 3-phosphate from glycerol: step 1/1. Activated by phosphorylation and inhibited by fructose 1,6-bisphosphate (FBP). Functionally, key enzyme in the regulation of glycerol uptake and metabolism. Catalyzes the phosphorylation of glycerol to yield sn-glycerol 3-phosphate. This chain is Glycerol kinase, found in Bacillus thuringiensis subsp. konkukian (strain 97-27).